We begin with the raw amino-acid sequence, 98 residues long: Phosphoribosyl-ATP pyrophosphatase (98 aa).

It belongs to the PRA-PH family.

The protein localises to the cytoplasm. It carries out the reaction 1-(5-phospho-beta-D-ribosyl)-ATP + H2O = 1-(5-phospho-beta-D-ribosyl)-5'-AMP + diphosphate + H(+). Its pathway is amino-acid biosynthesis; L-histidine biosynthesis; L-histidine from 5-phospho-alpha-D-ribose 1-diphosphate: step 2/9. This Haloarcula marismortui (strain ATCC 43049 / DSM 3752 / JCM 8966 / VKM B-1809) (Halobacterium marismortui) protein is Phosphoribosyl-ATP pyrophosphatase.